Consider the following 404-residue polypeptide: 1-deoxy-D-xylulose 5-phosphate reductoisomerase (404 aa).

Positions 10, 11, 12, 13, 36, 37, 38, and 124 each coordinate NADPH. Residue lysine 125 participates in 1-deoxy-D-xylulose 5-phosphate binding. Glutamate 126 provides a ligand contact to NADPH. Residue aspartate 150 coordinates Mn(2+). Serine 151, glutamate 152, serine 186, and histidine 209 together coordinate 1-deoxy-D-xylulose 5-phosphate. Glutamate 152 serves as a coordination point for Mn(2+). An NADPH-binding site is contributed by glycine 215. Positions 222, 227, 228, and 231 each coordinate 1-deoxy-D-xylulose 5-phosphate. Glutamate 231 is a Mn(2+) binding site.

This sequence belongs to the DXR family. In terms of assembly, homodimer. It depends on Mg(2+) as a cofactor. Mn(2+) serves as cofactor.

The enzyme catalyses 2-C-methyl-D-erythritol 4-phosphate + NADP(+) = 1-deoxy-D-xylulose 5-phosphate + NADPH + H(+). It functions in the pathway isoprenoid biosynthesis; isopentenyl diphosphate biosynthesis via DXP pathway; isopentenyl diphosphate from 1-deoxy-D-xylulose 5-phosphate: step 1/6. In terms of biological role, catalyzes the NADPH-dependent rearrangement and reduction of 1-deoxy-D-xylulose-5-phosphate (DXP) to 2-C-methyl-D-erythritol 4-phosphate (MEP). The protein is 1-deoxy-D-xylulose 5-phosphate reductoisomerase of Erwinia tasmaniensis (strain DSM 17950 / CFBP 7177 / CIP 109463 / NCPPB 4357 / Et1/99).